A 300-amino-acid polypeptide reads, in one-letter code: MENVNFTLNLFIEYLQIEKNYSEYTIACYKHDIGEFFEFMEREQIKQLQQVSYSDVRLFLTELHQRKQSSRSIARKMSSLRSFYKFLLREKIVSENPFALASLPKKEQKIPHFLYPDELEQLFVVNDLNTAIGQRNQAMIELLYATGIRVSECCNIRLSHIDFSVCTILISGKGNKQRYVPFGTYAKEALERYIQDGRQQLASKAKTPTDVLFLNARGGALTPRGVRHILNDIVERAALSLKVSPHTFRHTFATHLLNEGADLRSVQELLGHAHLSSTQVYTHVTKDHLRYVYLHSHPRA.

In terms of domain architecture, Core-binding (CB) spans glutamate 2–leucine 88. In terms of domain architecture, Tyr recombinase spans lysine 109–leucine 294. Catalysis depends on residues arginine 149, lysine 173, histidine 246, arginine 249, and histidine 272. Tyrosine 281 serves as the catalytic O-(3'-phospho-DNA)-tyrosine intermediate.

The protein belongs to the 'phage' integrase family. XerC subfamily. Forms a cyclic heterotetrameric complex composed of two molecules of XerC and two molecules of XerD.

Its subcellular location is the cytoplasm. Functionally, site-specific tyrosine recombinase, which acts by catalyzing the cutting and rejoining of the recombining DNA molecules. The XerC-XerD complex is essential to convert dimers of the bacterial chromosome into monomers to permit their segregation at cell division. It also contributes to the segregational stability of plasmids. The polypeptide is Tyrosine recombinase XerC (Anoxybacillus flavithermus (strain DSM 21510 / WK1)).